The following is a 384-amino-acid chain: MMEAVHFGAGNIGRGFIGETLAANGFKINFVDVNETIINALNQRGEYTITLAAPGEKKIHVDNVDGLNNAKDPEAVVKAIAQADLVTTAIGPKILPIIAPLIAQGLQARDAANNHQALDVIACENMIGGSQSLKKSVYEHLDDAGKTFADTYVGFPNAAVDRIVPQQKHDDPLAVSVEDFKEWVVDESQMKNKDLKLKTVDYVPDLEPYIERKLFSVNTGHATTAYTGKYLGYTTIGDAIKDPKVFNQAKGALAETRSLLLSEFKNFDEKDLENYQNRVLQRFQNPYISDDISRVARTPIRKLGYDERFIRPIRELKERGLNYSVLMDTVGMMFHYVEPNDAEAVKLQAMLKDQPLVDVIKEVTGLKDAGLIDEVEASVKSKDR.

4–15 (AVHFGAGNIGRG) is an NAD(+) binding site.

This sequence belongs to the mannitol dehydrogenase family.

It carries out the reaction D-mannitol 1-phosphate + NAD(+) = beta-D-fructose 6-phosphate + NADH + H(+). This Lacticaseibacillus paracasei (strain ATCC 334 / BCRC 17002 / CCUG 31169 / CIP 107868 / KCTC 3260 / NRRL B-441) (Lactobacillus paracasei) protein is Mannitol-1-phosphate 5-dehydrogenase.